We begin with the raw amino-acid sequence, 212 residues long: Phosphatidylserine decarboxylase proenzyme (212 aa).

The active-site Schiff-base intermediate with substrate; via pyruvic acid is S182. S182 is modified (pyruvic acid (Ser); by autocatalysis).

This sequence belongs to the phosphatidylserine decarboxylase family. PSD-A subfamily. Heterodimer of a large membrane-associated beta subunit and a small pyruvoyl-containing alpha subunit. It depends on pyruvate as a cofactor. In terms of processing, is synthesized initially as an inactive proenzyme. Formation of the active enzyme involves a self-maturation process in which the active site pyruvoyl group is generated from an internal serine residue via an autocatalytic post-translational modification. Two non-identical subunits are generated from the proenzyme in this reaction, and the pyruvate is formed at the N-terminus of the alpha chain, which is derived from the carboxyl end of the proenzyme. The post-translation cleavage follows an unusual pathway, termed non-hydrolytic serinolysis, in which the side chain hydroxyl group of the serine supplies its oxygen atom to form the C-terminus of the beta chain, while the remainder of the serine residue undergoes an oxidative deamination to produce ammonia and the pyruvoyl prosthetic group on the alpha chain.

The protein resides in the cell membrane. The enzyme catalyses a 1,2-diacyl-sn-glycero-3-phospho-L-serine + H(+) = a 1,2-diacyl-sn-glycero-3-phosphoethanolamine + CO2. Its pathway is phospholipid metabolism; phosphatidylethanolamine biosynthesis; phosphatidylethanolamine from CDP-diacylglycerol: step 2/2. Its function is as follows. Catalyzes the formation of phosphatidylethanolamine (PtdEtn) from phosphatidylserine (PtdSer). This chain is Phosphatidylserine decarboxylase proenzyme, found in Paraburkholderia phytofirmans (strain DSM 17436 / LMG 22146 / PsJN) (Burkholderia phytofirmans).